Consider the following 947-residue polypeptide: Plasma membrane ATPase 2 (947 aa).

Positions 1-103 (MSSTEAKQYK…TDGVHAGQRV (103 aa)) are disordered. Residues 1 to 144 (MSSTEAKQYK…AEENESLIVK (144 aa)) lie on the Cytoplasmic side of the membrane. Residues 7-22 (KQYKEKPSKEYLHASD) show a composition bias toward basic and acidic residues. Residues 26 to 61 (PANNSAASSSSSSSTSTSASSSAAAVPRKAAAASAA) show a composition bias toward low complexity. Residues 62-74 (DDSDSDEDIDQLI) show a composition bias toward acidic residues. A helical membrane pass occupies residues 145-165 (FLMFFVGPIQFVMEAAAILAA). The Extracellular segment spans residues 166 to 169 (GLSD). Residues 170 to 189 (WVDVGVICALLLLNASVGFI) form a helical membrane-spanning segment. The Cytoplasmic portion of the chain corresponds to 190–320 (QEFQAGSIVD…VEGHFTEVLN (131 aa)). Residues 321–342 (GIGIILLVLVIATLLLVWTACF) traverse the membrane as a helical segment. Topologically, residues 343–353 (YRTVGIVSILR) are extracellular. The chain crosses the membrane as a helical span at residues 354 to 376 (YTLGITIIGVPVGLPAVVTTTMA). Over 377–748 (VGAAYLAKKQ…IAILNNSLDI (372 aa)) the chain is Cytoplasmic. The 4-aspartylphosphate intermediate role is filled by Asp407. 2 residues coordinate Mg(2+): Asp663 and Asp667. A helical membrane pass occupies residues 749 to 767 (NLIVFIAIFADVATLTIAY). At 768–783 (DNAPYAPEPVKWNLPR) the chain is on the extracellular side. The helical transmembrane segment at 784 to 803 (LWGMSIILGIVLAIGSWITL) threads the bilayer. Residues 804–853 (TTMFLPNGGIIQNFGAMNGVMFLQISLTENWLIFVTRAAGPFWSSIPSWQ) lie on the Cytoplasmic side of the membrane. The helical transmembrane segment at 854-874 (LAGAVFAVDIIATMFTLFGWW) threads the bilayer. At 875 to 886 (SENWTDIVSVVR) the chain is on the extracellular side. The chain crosses the membrane as a helical span at residues 887–903 (VWIWSIGIFCVLGGFYY). The Cytoplasmic segment spans residues 904–947 (IMSTSQAFDRLMNGKSLKEKKSTRSVEDFMAAMQRVSTQHEKSS).

Belongs to the cation transport ATPase (P-type) (TC 3.A.3) family. Type IIIA subfamily.

It localises to the cell membrane. It carries out the reaction ATP + H2O + H(+)(in) = ADP + phosphate + 2 H(+)(out). The plasma membrane ATPase of plants and fungi is a hydrogen ion pump. The proton gradient it generates drives the active transport of nutrients by H(+)-symport. The resulting external acidification and/or internal alkinization may mediate growth responses. This chain is Plasma membrane ATPase 2 (PMA2), found in Saccharomyces cerevisiae (strain ATCC 204508 / S288c) (Baker's yeast).